The sequence spans 167 residues: Transmembrane protein 229B (167 aa).

Topologically, residues 1-14 (MASAEPLTALSRWY) are cytoplasmic. A helical transmembrane segment spans residues 15–35 (LYAIHGYFCEVMFTAAWEFVV). Over 36–40 (NFNWK) the chain is Extracellular. A helical transmembrane segment spans residues 41–61 (FPGVTSVWALFIYGTSILIVE). Over 62–73 (RMYLRLRGRCPL) the chain is Cytoplasmic. The chain crosses the membrane as a helical span at residues 74-94 (LVRCVIYTLWTYLWEFTTGFI). The Extracellular segment spans residues 95 to 109 (LRQFNACPWDYSQFD). The chain crosses the membrane as a helical span at residues 110–130 (FDFMGLITLEYAVPWFCGALI). The Cytoplasmic portion of the chain corresponds to 131-167 (MEQFIIRNTLRLRFDKDAEPGEPASPPALANGHVKTD). A disordered region spans residues 148–167 (AEPGEPASPPALANGHVKTD).

Belongs to the TMEM229 family.

It is found in the membrane. The sequence is that of Transmembrane protein 229B (TMEM229B) from Mus musculus (Mouse).